The sequence spans 87 residues: Cytochrome c oxidase subunit 6B1 (87 aa).

The CHCH domain occupies 28 to 74 (TRNCWQNYLDFHRCQKAMTTKGGNVSVCEWYQRVYQSLCPTSWVTDW). A Cx9C motif motif is present at residues 31-41 (CWQNYLDFHRC). Disulfide bonds link Cys31–Cys66 and Cys41–Cys55. Positions 55-66 (CEWYQRVYQSLC) match the Cx10C motif motif.

Its subcellular location is the mitochondrion intermembrane space. Its function is as follows. Connects the two COX monomers into the physiological dimeric form. In Macaca fascicularis (Crab-eating macaque), this protein is Cytochrome c oxidase subunit 6B1 (COX6B1).